The sequence spans 497 residues: MVRVPFVTAVTTVFSYGVIFGFGHLRDWFRALLRSLFSGHSPAAAGTNLKGYAPICGGQEDFYYRRFVRRVQDCFWRPIASKPDAWFDVVERYSNDSNKTLHRTTKTSRCLNLGSYNYLGFAAADEYCTPRVIESLKKYSASTCSVRVDGGNTKLHVELEELVARFVGKPAAILFGMGYVTNSAIIPALIGKGGLIISDSLNHNSIVNGARGSGASVQVFQHNNPAHLEEVLREQIAGGQPRTHRRWKKIIVIVEGIYSMEGELCKLPEIVAVCKKYKAYTYLDEAHSIGAVGKTGRGVCELLGVDPADVDIMMGTFTKSFGSCGGYIAASKEIIDHLKHICPAHIYATSMSPPAVQQVISAIEVILGEDGSDRGAKKLAQIRENSNFFRSELEKMGFEVLGDNDSPVMPIMLYNPAKMPAFSRECLRQKVAIVTVSFPATPLLLARARICISASHSREDLIKGLEVISKVGDLVGIKYLPVEHEKTTSAEKLKKIQ.

A helical transmembrane segment spans residues 4–24 (VPFVTAVTTVFSYGVIFGFGH). Lysine 319 bears the N6-(pyridoxal phosphate)lysine mark.

This sequence belongs to the class-II pyridoxal-phosphate-dependent aminotransferase family. As to quaternary structure, heterodimer with LCB1. Component of the serine palmitoyltransferase (SPT) complex, composed of LCB1 and LCB2. The cofactor is pyridoxal 5'-phosphate.

The protein resides in the endoplasmic reticulum membrane. It carries out the reaction L-serine + hexadecanoyl-CoA + H(+) = 3-oxosphinganine + CO2 + CoA. Its pathway is lipid metabolism; sphingolipid metabolism. Its function is as follows. Serine palmitoyltransferase (SPT). The heterodimer formed with LCB1 constitutes the catalytic core. This chain is Long chain base biosynthesis protein 2c, found in Oryza sativa subsp. japonica (Rice).